The following is a 373-amino-acid chain: tRNA-specific 2-thiouridylase MnmA (373 aa).

ATP is bound by residues 12–19 and methionine 38; that span reads GMSGGVDS. The segment at 98-100 is interaction with target base in tRNA; sequence NPD. The active-site Nucleophile is cysteine 103. The cysteines at positions 103 and 200 are disulfide-linked. Glycine 127 is a binding site for ATP. An interaction with tRNA region spans residues 150-152; that stretch reads KDQ. Cysteine 200 serves as the catalytic Cysteine persulfide intermediate. An interaction with tRNA region spans residues 312–313; the sequence is RY.

This sequence belongs to the MnmA/TRMU family.

The protein resides in the cytoplasm. The enzyme catalyses S-sulfanyl-L-cysteinyl-[protein] + uridine(34) in tRNA + AH2 + ATP = 2-thiouridine(34) in tRNA + L-cysteinyl-[protein] + A + AMP + diphosphate + H(+). Functionally, catalyzes the 2-thiolation of uridine at the wobble position (U34) of tRNA, leading to the formation of s(2)U34. The polypeptide is tRNA-specific 2-thiouridylase MnmA (Streptococcus pneumoniae (strain Hungary19A-6)).